The following is a 289-amino-acid chain: Ribosomal RNA small subunit methyltransferase A (289 aa).

Positions 21, 23, 48, 69, 94, and 120 each coordinate S-adenosyl-L-methionine.

Belongs to the class I-like SAM-binding methyltransferase superfamily. rRNA adenine N(6)-methyltransferase family. RsmA subfamily.

The protein resides in the cytoplasm. It catalyses the reaction adenosine(1518)/adenosine(1519) in 16S rRNA + 4 S-adenosyl-L-methionine = N(6)-dimethyladenosine(1518)/N(6)-dimethyladenosine(1519) in 16S rRNA + 4 S-adenosyl-L-homocysteine + 4 H(+). In terms of biological role, specifically dimethylates two adjacent adenosines (A1518 and A1519) in the loop of a conserved hairpin near the 3'-end of 16S rRNA in the 30S particle. May play a critical role in biogenesis of 30S subunits. This chain is Ribosomal RNA small subunit methyltransferase A, found in Actinobacillus pleuropneumoniae serotype 3 (strain JL03).